The following is a 453-amino-acid chain: Chromosomal replication initiator protein DnaA (453 aa).

The interval 1 to 71 is domain I, interacts with DnaA modulators; sequence MSEKEIWEKV…QAILFDVVGY (71 aa). Residues 71-114 form a domain II region; that stretch reads YEVKPHFITTEELANYSNNETATPKEATKPSTETTEDNHVLGRE. A domain III, AAA+ region region spans residues 115 to 331; that stretch reads QFNAHNTFDT…GALTRLLAYS (217 aa). 4 residues coordinate ATP: G159, G161, K162, and T163. Residues 332–453 are domain IV, binds dsDNA; that stretch reads QLLGKPITTE…ENLEKEIRNV (122 aa).

This sequence belongs to the DnaA family. Oligomerizes as a right-handed, spiral filament on DNA at oriC.

The protein resides in the cytoplasm. Its function is as follows. Plays an essential role in the initiation and regulation of chromosomal replication. ATP-DnaA binds to the origin of replication (oriC) to initiate formation of the DNA replication initiation complex once per cell cycle. Binds the DnaA box (a 9 base pair repeat at the origin) and separates the double-stranded (ds)DNA. Forms a right-handed helical filament on oriC DNA; dsDNA binds to the exterior of the filament while single-stranded (ss)DNA is stabiized in the filament's interior. The ATP-DnaA-oriC complex binds and stabilizes one strand of the AT-rich DNA unwinding element (DUE), permitting loading of DNA polymerase. After initiation quickly degrades to an ADP-DnaA complex that is not apt for DNA replication. Binds acidic phospholipids. This chain is Chromosomal replication initiator protein DnaA, found in Staphylococcus aureus (strain MRSA252).